Reading from the N-terminus, the 476-residue chain is Probable serine carboxypeptidase CPVL (476 aa).

The signal sequence occupies residues 1–22 (MVGAMWKVIVSLVLLMPGPCDG). Residues asparagine 81 and asparagine 132 are each glycosylated (N-linked (GlcNAc...) asparagine). Serine 204 is an active-site residue. Residues asparagine 307 and asparagine 346 are each glycosylated (N-linked (GlcNAc...) asparagine). Active-site residues include aspartate 388 and histidine 448.

The protein belongs to the peptidase S10 family. As to expression, expressed in macrophages but not in other leukocytes. Abundantly expressed in heart and kidney. Also expressed in spleen, leukocytes, and placenta.

In terms of biological role, may be involved in the digestion of phagocytosed particles in the lysosome, participation in an inflammatory protease cascade, and trimming of peptides for antigen presentation. The polypeptide is Probable serine carboxypeptidase CPVL (CPVL) (Homo sapiens (Human)).